Here is a 213-residue protein sequence, read N- to C-terminus: Peptidyl-tRNA hydrolase (213 aa).

TRNA is bound at residue tyrosine 15. Histidine 20 functions as the Proton acceptor in the catalytic mechanism. TRNA is bound by residues phenylalanine 66, asparagine 68, and asparagine 114. The tract at residues 187–213 is disordered; that stretch reads HTTKPPRPKPPRPAAAPVDAPAAPGDQ. A compositionally biased stretch (low complexity) spans 201–213; that stretch reads AAPVDAPAAPGDQ.

This sequence belongs to the PTH family. As to quaternary structure, monomer.

Its subcellular location is the cytoplasm. It carries out the reaction an N-acyl-L-alpha-aminoacyl-tRNA + H2O = an N-acyl-L-amino acid + a tRNA + H(+). In terms of biological role, hydrolyzes ribosome-free peptidyl-tRNAs (with 1 or more amino acids incorporated), which drop off the ribosome during protein synthesis, or as a result of ribosome stalling. Catalyzes the release of premature peptidyl moieties from peptidyl-tRNA molecules trapped in stalled 50S ribosomal subunits, and thus maintains levels of free tRNAs and 50S ribosomes. This is Peptidyl-tRNA hydrolase from Paracidovorax citrulli (strain AAC00-1) (Acidovorax citrulli).